Reading from the N-terminus, the 652-residue chain is Protein phosphatase Slingshot homolog 3 (652 aa).

The span at 1-16 (MALVTVSRSPPASGHS) shows a compositional bias: polar residues. Residues 1-31 (MALVTVSRSPPASGHSTPVGPTDRVIRRRGR) form a disordered region. The residue at position 2 (Ala2) is an N-acetylalanine. Phosphoserine is present on residues Ser9, Ser37, Ser85, and Ser87. A disordered region spans residues 43 to 91 (GAVLGLQDGGEGNDAAEADPEPMEKPSGEEQPAEDQTDNGQGSQSPWKQ). Positions 80–90 (DNGQGSQSPWK) are enriched in polar residues. The region spanning 266–321 (EQMEQAILAELWQVLDASDLDSVTSKEIRQALELRLGCPLQQYRDFIDNQMLLLMA) is the DEK-C domain. Residues 325-466 (RASRIFPHLY…LQTYQGILTA (142 aa)) form the Tyrosine-protein phosphatase domain. Cys410 serves as the catalytic Phosphocysteine intermediate. Disordered regions lie at residues 484 to 526 (EPLA…LGLR), 540 to 580 (LLEP…KGGQ), and 610 to 652 (RAFQ…EGKA). The segment covering 540 to 552 (LLEPSSEPESTTE) has biased composition (low complexity). Residues 642–652 (SVDDSREEGKA) show a composition bias toward basic and acidic residues.

The protein belongs to the protein-tyrosine phosphatase family. In terms of assembly, does not bind to, or colocalize with, filamentous actin.

Its subcellular location is the cytoplasm. It localises to the cytoskeleton. The protein localises to the nucleus. The enzyme catalyses O-phospho-L-tyrosyl-[protein] + H2O = L-tyrosyl-[protein] + phosphate. The catalysed reaction is O-phospho-L-seryl-[protein] + H2O = L-seryl-[protein] + phosphate. It carries out the reaction O-phospho-L-threonyl-[protein] + H2O = L-threonyl-[protein] + phosphate. Functionally, protein phosphatase which may play a role in the regulation of actin filament dynamics. Can dephosphorylate and activate the actin binding/depolymerizing factor cofilin, which subsequently binds to actin filaments and stimulates their disassembly. The polypeptide is Protein phosphatase Slingshot homolog 3 (Ssh3) (Rattus norvegicus (Rat)).